The primary structure comprises 360 residues: Carbamoyl phosphate synthase small chain (360 aa).

The segment at 1–169 is CPSase; it reads MTKRLLILED…TKTAYPAPGI (169 aa). 3 residues coordinate L-glutamine: Ser-46, Gly-220, and Gly-222. The Glutamine amidotransferase type-1 domain maps to 172–358; sequence NIVLVDFGLK…LEMIDSWRCT (187 aa). Cys-247 serves as the catalytic Nucleophile. Residues Met-248, Gln-251, Asn-289, Gly-291, and Tyr-292 each coordinate L-glutamine. Catalysis depends on residues His-331 and Asp-333.

The protein belongs to the CarA family. As to quaternary structure, composed of two chains; the small (or glutamine) chain promotes the hydrolysis of glutamine to ammonia, which is used by the large (or ammonia) chain to synthesize carbamoyl phosphate. Tetramer of heterodimers (alpha,beta)4.

It carries out the reaction hydrogencarbonate + L-glutamine + 2 ATP + H2O = carbamoyl phosphate + L-glutamate + 2 ADP + phosphate + 2 H(+). The catalysed reaction is L-glutamine + H2O = L-glutamate + NH4(+). It participates in amino-acid biosynthesis; L-arginine biosynthesis; carbamoyl phosphate from bicarbonate: step 1/1. Its pathway is pyrimidine metabolism; UMP biosynthesis via de novo pathway; (S)-dihydroorotate from bicarbonate: step 1/3. Functionally, small subunit of the glutamine-dependent carbamoyl phosphate synthetase (CPSase). CPSase catalyzes the formation of carbamoyl phosphate from the ammonia moiety of glutamine, carbonate, and phosphate donated by ATP, constituting the first step of 2 biosynthetic pathways, one leading to arginine and/or urea and the other to pyrimidine nucleotides. The small subunit (glutamine amidotransferase) binds and cleaves glutamine to supply the large subunit with the substrate ammonia. This chain is Carbamoyl phosphate synthase small chain, found in Streptococcus pyogenes serotype M3 (strain SSI-1).